Consider the following 366-residue polypeptide: Chorismate synthase (366 aa).

NADP(+)-binding residues include Arg-48 and Arg-54. Residues 132–134 (RSS), 244–245 (NA), Gly-289, 304–308 (KPTSS), and Arg-330 contribute to the FMN site.

The protein belongs to the chorismate synthase family. As to quaternary structure, homotetramer. Requires FMNH2 as cofactor.

It catalyses the reaction 5-O-(1-carboxyvinyl)-3-phosphoshikimate = chorismate + phosphate. Its pathway is metabolic intermediate biosynthesis; chorismate biosynthesis; chorismate from D-erythrose 4-phosphate and phosphoenolpyruvate: step 7/7. Its function is as follows. Catalyzes the anti-1,4-elimination of the C-3 phosphate and the C-6 proR hydrogen from 5-enolpyruvylshikimate-3-phosphate (EPSP) to yield chorismate, which is the branch point compound that serves as the starting substrate for the three terminal pathways of aromatic amino acid biosynthesis. This reaction introduces a second double bond into the aromatic ring system. The sequence is that of Chorismate synthase from Methylorubrum populi (strain ATCC BAA-705 / NCIMB 13946 / BJ001) (Methylobacterium populi).